The chain runs to 236 residues: Small ribosomal subunit protein uS2c (236 aa).

This sequence belongs to the universal ribosomal protein uS2 family.

The protein resides in the plastid. It localises to the chloroplast. The protein is Small ribosomal subunit protein uS2c (rps2) of Phalaenopsis aphrodite subsp. formosana (Moth orchid).